The primary structure comprises 444 residues: Pineal opsin (444 aa).

Residues 1–20 form a disordered region; sequence MDALQESPPSHHSLPSALPS. Residues 1-46 lie on the Extracellular side of the membrane; it reads MDALQESPPSHHSLPSALPSATGGNGTVATMHNPFERPLEGIAPWN. Over residues 7-20 the composition is skewed to low complexity; the sequence is SPPSHHSLPSALPS. The N-linked (GlcNAc...) asparagine glycan is linked to Asn-25. The chain crosses the membrane as a helical span at residues 47–71; sequence FTMLAALMGTITALSLGENFAVIVV. At 72 to 83 the chain is on the cytoplasmic side; sequence TARFRQLRQPLN. A helical membrane pass occupies residues 84-108; the sequence is YVLVNLAAADLLVSAIGGSVSFFTN. The Extracellular segment spans residues 109–123; that stretch reads IKGYFFLGVHACVLE. Cys-120 and Cys-197 are oxidised to a cystine. Residues 124-143 traverse the membrane as a helical segment; sequence GFAVTYFGVVALWSLALLAF. Over 144–162 the chain is Cytoplasmic; it reads ERYFVICRPLGNFRLQSKH. A helical membrane pass occupies residues 163–186; that stretch reads AVLGLAVVWVFSLACTLPPVLGWS. Residues 187–210 lie on the Extracellular side of the membrane; sequence SYRPSMIGTTCEPNWYSGELHDHT. A helical membrane pass occupies residues 211-238; the sequence is FILMFFSTCFIFPLAVIFFSYGKLIQKL. Residues 239–260 are Cytoplasmic-facing; sequence KKASETQRGLESTRRAEQQVTR. Residues 261-284 form a helical membrane-spanning segment; the sequence is MVVVMILAFLVCWMPYATFSIVVT. Residues 285 to 292 lie on the Extracellular side of the membrane; that stretch reads ACPTIHLD. Residues 293-317 form a helical membrane-spanning segment; the sequence is PLLAAVPAFFSKTATVYNPVIYIFM. Lys-304 is subject to N6-(retinylidene)lysine. The Cytoplasmic portion of the chain corresponds to 318–444; that stretch reads NKQFRDCFVQ…SESVSKICPV (127 aa). The S-palmitoyl cysteine moiety is linked to residue Cys-331. 2 disordered regions span residues 341-360 and 388-420; these read QTAG…QSPG and EPTM…QQGT. Over residues 409–419 the composition is skewed to low complexity; it reads QQQGQQQQQQG.

This sequence belongs to the G-protein coupled receptor 1 family. Opsin subfamily. In terms of processing, phosphorylated on some or all of the serine and threonine residues present in the C-terminal region. As to expression, pineal gland.

Its subcellular location is the membrane. In Petromyzon marinus (Sea lamprey), this protein is Pineal opsin.